The primary structure comprises 774 residues: E3 ubiquitin-protein ligase RFWD3 (774 aa).

Phosphoserine; by ATM and ATR occurs at positions 46 and 63. Disordered regions lie at residues N95 to S116, P139 to G225, and G257 to D280. The segment covering S106 to S116 has biased composition (polar residues). Residues R150 to R162 show a composition bias toward basic residues. Residues S211–S221 are compositionally biased toward low complexity. An RING-type; degenerate zinc finger spans residues C287–N331. The stretch at S361–Q413 forms a coiled coil. WD repeat units lie at residues M495–N537, G539–Q577, and K583–P628.

Interacts with MDM2 and p53/TP53. Binds to the RPA complex via direct interaction with RPA2. Interacts with RAD51. Phosphorylated at Ser-46 and Ser-63 upon DNA damage by ATM or ATR. ATM phosphorylation occurs at early times upon DNA damage, while ATR is the major kinase at later times. Phosphorylation by ATM and ATR is required to stabilize p53/TP53. Part of the phosphorylation depends upon RPA2 presence.

It localises to the nucleus. The protein localises to the PML body. The protein resides in the cytoplasm. The catalysed reaction is S-ubiquitinyl-[E2 ubiquitin-conjugating enzyme]-L-cysteine + [acceptor protein]-L-lysine = [E2 ubiquitin-conjugating enzyme]-L-cysteine + N(6)-ubiquitinyl-[acceptor protein]-L-lysine.. It participates in protein modification; protein ubiquitination. E3 ubiquitin-protein ligase required for the repair of DNA interstrand cross-links (ICL) in response to DNA damage. Plays a key role in RPA-mediated DNA damage signaling and repair. Acts by mediating ubiquitination of the RPA complex (RPA1, RPA2 and RPA3 subunits) and RAD51 at stalled replication forks, leading to remove them from DNA damage sites and promote homologous recombination. Also mediates the ubiquitination of p53/TP53 in the late response to DNA damage, and acts as a positive regulator of p53/TP53 stability, thereby regulating the G1/S DNA damage checkpoint. May act by catalyzing the formation of short polyubiquitin chains on p53/TP53 that are not targeted to the proteasome. In response to ionizing radiation, interacts with MDM2 and enhances p53/TP53 ubiquitination, possibly by restricting MDM2 from extending polyubiquitin chains on ubiquitinated p53/TP53. Required to translesion DNA synthesis across DNA-protein cross-link adducts by catalyzing ubiquitination of proteins on single-stranded DNA (ssDNA). This chain is E3 ubiquitin-protein ligase RFWD3, found in Homo sapiens (Human).